The sequence spans 430 residues: tRNA(Ile)-lysidine synthase (430 aa).

27-32 contributes to the ATP binding site; it reads SGGSDS.

Belongs to the tRNA(Ile)-lysidine synthase family.

It is found in the cytoplasm. It carries out the reaction cytidine(34) in tRNA(Ile2) + L-lysine + ATP = lysidine(34) in tRNA(Ile2) + AMP + diphosphate + H(+). Ligates lysine onto the cytidine present at position 34 of the AUA codon-specific tRNA(Ile) that contains the anticodon CAU, in an ATP-dependent manner. Cytidine is converted to lysidine, thus changing the amino acid specificity of the tRNA from methionine to isoleucine. In Rickettsia typhi (strain ATCC VR-144 / Wilmington), this protein is tRNA(Ile)-lysidine synthase.